We begin with the raw amino-acid sequence, 181 residues long: Large ribosomal subunit protein uL5 (181 aa).

This sequence belongs to the universal ribosomal protein uL5 family. As to quaternary structure, part of the 50S ribosomal subunit; part of the 5S rRNA/L5/L18/L25 subcomplex. Contacts the 5S rRNA and the P site tRNA. Forms a bridge to the 30S subunit in the 70S ribosome.

This is one of the proteins that bind and probably mediate the attachment of the 5S RNA into the large ribosomal subunit, where it forms part of the central protuberance. In the 70S ribosome it contacts protein S13 of the 30S subunit (bridge B1b), connecting the 2 subunits; this bridge is implicated in subunit movement. Contacts the P site tRNA; the 5S rRNA and some of its associated proteins might help stabilize positioning of ribosome-bound tRNAs. This is Large ribosomal subunit protein uL5 from Acaryochloris marina (strain MBIC 11017).